Here is a 99-residue protein sequence, read N- to C-terminus: uncharacterized protein (99 aa).

This is an uncharacterized protein from Micromonospora olivasterospora.